Reading from the N-terminus, the 291-residue chain is Lipoyl synthase 1 (291 aa).

Positions 34, 39, 45, 60, 64, 67, and 274 each coordinate [4Fe-4S] cluster. The Radical SAM core domain maps to 46-263 (FQAGTATFLI…QVYGEELGFL (218 aa)).

This sequence belongs to the radical SAM superfamily. Lipoyl synthase family. The cofactor is [4Fe-4S] cluster.

The protein resides in the cytoplasm. It carries out the reaction [[Fe-S] cluster scaffold protein carrying a second [4Fe-4S](2+) cluster] + N(6)-octanoyl-L-lysyl-[protein] + 2 oxidized [2Fe-2S]-[ferredoxin] + 2 S-adenosyl-L-methionine + 4 H(+) = [[Fe-S] cluster scaffold protein] + N(6)-[(R)-dihydrolipoyl]-L-lysyl-[protein] + 4 Fe(3+) + 2 hydrogen sulfide + 2 5'-deoxyadenosine + 2 L-methionine + 2 reduced [2Fe-2S]-[ferredoxin]. The protein operates within protein modification; protein lipoylation via endogenous pathway; protein N(6)-(lipoyl)lysine from octanoyl-[acyl-carrier-protein]: step 2/2. Catalyzes the radical-mediated insertion of two sulfur atoms into the C-6 and C-8 positions of the octanoyl moiety bound to the lipoyl domains of lipoate-dependent enzymes, thereby converting the octanoylated domains into lipoylated derivatives. The polypeptide is Lipoyl synthase 1 (Nostoc sp. (strain PCC 7120 / SAG 25.82 / UTEX 2576)).